The primary structure comprises 120 residues: ATP-dependent Clp protease adapter protein ClpS (120 aa).

Residues 1-27 (MHAPSEIRLTFNQDRPQSNEDDGSGLA) are disordered.

Belongs to the ClpS family. As to quaternary structure, binds to the N-terminal domain of the chaperone ClpA.

Functionally, involved in the modulation of the specificity of the ClpAP-mediated ATP-dependent protein degradation. The polypeptide is ATP-dependent Clp protease adapter protein ClpS (Pseudomonas putida (strain GB-1)).